The following is a 145-amino-acid chain: Deoxyuridine 5'-triphosphate nucleotidohydrolase (145 aa).

Substrate-binding positions include 62-64, N75, 79-81, and K89; these read RSG and TVD.

Belongs to the dUTPase family. The cofactor is Mg(2+).

It carries out the reaction dUTP + H2O = dUMP + diphosphate + H(+). It participates in pyrimidine metabolism; dUMP biosynthesis; dUMP from dCTP (dUTP route): step 2/2. In terms of biological role, this enzyme is involved in nucleotide metabolism: it produces dUMP, the immediate precursor of thymidine nucleotides and it decreases the intracellular concentration of dUTP so that uracil cannot be incorporated into DNA. The chain is Deoxyuridine 5'-triphosphate nucleotidohydrolase from Helicobacter pylori (strain P12).